We begin with the raw amino-acid sequence, 437 residues long: Phosphomethylpyrimidine synthase (437 aa).

Substrate-binding positions include Asn-69, Met-98, Tyr-127, His-163, Ser-185–Gly-187, Asp-226–Arg-229, and Glu-265. Zn(2+) is bound at residue His-269. Substrate is bound at residue Tyr-292. His-333 lines the Zn(2+) pocket. Residues Cys-409, Cys-412, and Cys-416 each contribute to the [4Fe-4S] cluster site.

The protein belongs to the ThiC family. It depends on [4Fe-4S] cluster as a cofactor.

It carries out the reaction 5-amino-1-(5-phospho-beta-D-ribosyl)imidazole + S-adenosyl-L-methionine = 4-amino-2-methyl-5-(phosphooxymethyl)pyrimidine + CO + 5'-deoxyadenosine + formate + L-methionine + 3 H(+). Its pathway is cofactor biosynthesis; thiamine diphosphate biosynthesis. Functionally, catalyzes the synthesis of the hydroxymethylpyrimidine phosphate (HMP-P) moiety of thiamine from aminoimidazole ribotide (AIR) in a radical S-adenosyl-L-methionine (SAM)-dependent reaction. This chain is Phosphomethylpyrimidine synthase, found in Clostridium botulinum (strain Langeland / NCTC 10281 / Type F).